Reading from the N-terminus, the 563-residue chain is Methylcrotonoyl-CoA carboxylase beta chain, mitochondrial (563 aa).

The transit peptide at 1–22 directs the protein to the mitochondrion; the sequence is MWAVLRLALRPCARASPAGPRA. One can recognise a CoA carboxyltransferase N-terminal domain in the interval 49 to 306; the sequence is MKALVNQLHE…QKKLDVTIEP (258 aa). The segment at 49–555 is carboxyltransferase; that stretch reads MKALVNQLHE…SAALNAPIEK (507 aa). Lysine 70 is subject to N6-acetyllysine; alternate. Residue lysine 70 is modified to N6-succinyllysine; alternate. Lysine 141 is subject to N6-succinyllysine. Positions 309-555 constitute a CoA carboxyltransferase C-terminal domain; it reads EPLFPADELY…SAALNAPIEK (247 aa). Positions 343–372 are acyl-CoA binding; the sequence is RFTEFKAFYGDTLVTGFARIFGYPVGIVGN. At lysine 495 the chain carries N6-acetyllysine; alternate. Residue lysine 495 is modified to N6-succinyllysine; alternate. Position 511 is an N6-acetyllysine (lysine 511).

It belongs to the AccD/PCCB family. As to quaternary structure, probably a dodecamer composed of six biotin-containing alpha subunits (MCCC1) and six beta (MCCC2) subunits.

It is found in the mitochondrion matrix. The catalysed reaction is 3-methylbut-2-enoyl-CoA + hydrogencarbonate + ATP = 3-methyl-(2E)-glutaconyl-CoA + ADP + phosphate + H(+). Its pathway is amino-acid degradation; L-leucine degradation; (S)-3-hydroxy-3-methylglutaryl-CoA from 3-isovaleryl-CoA: step 2/3. In terms of biological role, carboxyltransferase subunit of the 3-methylcrotonyl-CoA carboxylase, an enzyme that catalyzes the conversion of 3-methylcrotonyl-CoA to 3-methylglutaconyl-CoA, a critical step for leucine and isovaleric acid catabolism. The sequence is that of Methylcrotonoyl-CoA carboxylase beta chain, mitochondrial (MCCC2) from Homo sapiens (Human).